Reading from the N-terminus, the 263-residue chain is Oxidoreductase UcpA (263 aa).

10–32 (LITGALQGIGEGIARTFARHGAN) is a binding site for NAD(+). Ser-141 contacts substrate. Catalysis depends on Tyr-155, which acts as the Proton acceptor.

It belongs to the short-chain dehydrogenases/reductases (SDR) family.

The sequence is that of Oxidoreductase UcpA (ucpA) from Escherichia coli O157:H7.